Here is a 666-residue protein sequence, read N- to C-terminus: Long-chain-fatty-acid--CoA ligase ACSBG2 (666 aa).

ATP contacts are provided by residues 230 to 238 (TSGTTGIPK), 418 to 423 (ELYGLS), aspartate 496, and arginine 624.

Belongs to the ATP-dependent AMP-binding enzyme family. Bubblegum subfamily. As to expression, testis-specific.

The protein localises to the cytoplasm. It localises to the membrane. The catalysed reaction is a long-chain fatty acid + ATP + CoA = a long-chain fatty acyl-CoA + AMP + diphosphate. It catalyses the reaction (5Z,8Z,11Z,14Z)-eicosatetraenoate + ATP + CoA = (5Z,8Z,11Z,14Z)-eicosatetraenoyl-CoA + AMP + diphosphate. The enzyme catalyses hexadecanoate + ATP + CoA = hexadecanoyl-CoA + AMP + diphosphate. It carries out the reaction (9Z)-octadecenoate + ATP + CoA = (9Z)-octadecenoyl-CoA + AMP + diphosphate. The catalysed reaction is (9Z,12Z)-octadecadienoate + ATP + CoA = (9Z,12Z)-octadecadienoyl-CoA + AMP + diphosphate. It catalyses the reaction tetracosanoate + ATP + CoA = tetracosanoyl-CoA + AMP + diphosphate. Its function is as follows. Catalyzes the conversion of fatty acids such as long chain and very long-chain fatty acids to their active form acyl-CoAs for both synthesis of cellular lipids, and degradation via beta-oxidation. Can activate diverse saturated, monosaturated and polyunsaturated fatty acids. Has increased ability to activate oleic and linoleic acid. May play a role in spermatogenesis. This is Long-chain-fatty-acid--CoA ligase ACSBG2 from Homo sapiens (Human).